A 418-amino-acid polypeptide reads, in one-letter code: Lactosylceramide alpha-2,3-sialyltransferase (418 aa).

The interval 1-25 is disordered; that stretch reads MRTKAAGCAERRPLQPRTEAAAAPA. At 1-61 the chain is on the cytoplasmic side; it reads MRTKAAGCAE…RAQSKMRRPS (61 aa). Residues 62 to 82 form a helical; Signal-anchor for type II membrane protein membrane-spanning segment; it reads LLLKDILKCTLLVFGVWILYI. Residues 83–418 lie on the Lumenal side of the membrane; that stretch reads LKLNYTTEEC…DLSGGIDREF (336 aa). Residues Asn86, Asn236, and Asn390 are each glycosylated (N-linked (GlcNAc...) asparagine). Cys195 and Cys353 are joined by a disulfide.

The protein belongs to the glycosyltransferase 29 family. In terms of processing, N-glycosylated. In terms of tissue distribution, ubiquitous. High expression in brain, skeletal muscle, placenta, and testis. mRNA widely distributed in human brain, but slightly elevated expression was observed in the cerebral cortex, temporal lobe, and putamen.

Its subcellular location is the golgi apparatus membrane. It carries out the reaction a beta-D-Gal-(1-&gt;4)-beta-D-Glc-(1&lt;-&gt;1)-Cer(d18:1(4E)) + CMP-N-acetyl-beta-neuraminate = a ganglioside GM3 (d18:1(4E)) + CMP + H(+). It catalyses the reaction ganglioside GA2 (d18:1(4E)/18:0) + CMP-N-acetyl-beta-neuraminate = ganglioside GM2 (d18:1(4E)/18:0) + CMP + H(+). The catalysed reaction is a beta-D-Gal-(1&lt;-&gt;1')-ceramide + CMP-N-acetyl-beta-neuraminate = N-acetyl-alpha-neuraminosyl-(2-&gt;3)-beta-D-galactosyl-(1&lt;-&gt;1')-ceramide + CMP + H(+). The enzyme catalyses a beta-D-galactosyl-(1&lt;-&gt;1')-N-acylsphing-4-enine + CMP-N-acetyl-beta-neuraminate = a ganglioside GM4 (d18:1(4E)) + CMP + H(+). It carries out the reaction ganglioside GA1 (d18:1(4E)/18:0) + CMP-N-acetyl-beta-neuraminate = ganglioside GM1 (d18:1(4E)/18:0) + CMP + H(+). It functions in the pathway glycolipid biosynthesis. Its function is as follows. Transfers the sialyl group (N-acetyl-alpha-neuraminyl or NeuAc) from CMP-NeuAc to the non-reducing terminal galactose (Gal) of glycosphingolipids forming gangliosides (important molecules involved in the regulation of multiple cellular processes, including cell proliferation and differentiation, apoptosis, embryogenesis, development, and oncogenesis). Mainly involved in the biosynthesis of ganglioside GM3 but can also use different glycolipids as substrate acceptors such as D-galactosylceramide (GalCer), asialo-GM2 (GA2) and asialo-GM1 (GA1), although less preferentially than beta-D-Gal-(1-&gt;4)-beta-D-Glc-(1&lt;-&gt;1)-Cer (LacCer). The protein is Lactosylceramide alpha-2,3-sialyltransferase (ST3GAL5) of Homo sapiens (Human).